A 253-amino-acid polypeptide reads, in one-letter code: Ribosome maturation factor RimP (253 aa).

Residues 186–199 show a composition bias toward basic and acidic residues; that stretch reads RRGKAAEREKKRDL. The disordered stretch occupies residues 186–253; it reads RRGKAAEREK…RARRGEIDPD (68 aa). Positions 201–216 are enriched in low complexity; that stretch reads LAPPLAPHAKPAAQAK. The span at 240–253 shows a compositional bias: basic and acidic residues; the sequence is LAADRARRGEIDPD.

It belongs to the RimP family.

It is found in the cytoplasm. Its function is as follows. Required for maturation of 30S ribosomal subunits. The chain is Ribosome maturation factor RimP from Bradyrhizobium sp. (strain BTAi1 / ATCC BAA-1182).